Consider the following 366-residue polypeptide: Flagellar P-ring protein (366 aa).

Positions 1 to 20 are cleaved as a signal peptide; it reads MVIKFLSALILLLVTTAAQA.

Belongs to the FlgI family. In terms of assembly, the basal body constitutes a major portion of the flagellar organelle and consists of four rings (L,P,S, and M) mounted on a central rod.

The protein resides in the periplasm. The protein localises to the bacterial flagellum basal body. Functionally, assembles around the rod to form the L-ring and probably protects the motor/basal body from shearing forces during rotation. The chain is Flagellar P-ring protein from Escherichia coli (strain UTI89 / UPEC).